Reading from the N-terminus, the 216-residue chain is Sugar fermentation stimulation protein homolog (216 aa).

Belongs to the SfsA family.

This is Sugar fermentation stimulation protein homolog from Thermoplasma volcanium (strain ATCC 51530 / DSM 4299 / JCM 9571 / NBRC 15438 / GSS1).